The sequence spans 581 residues: Coiled-coil domain-containing protein 102A (581 aa).

4 disordered regions span residues 1–61 (MNHT…GLGC), 156–219 (QRVR…IGTD), 496–517 (QAED…SLDE), and 534–581 (SRLR…LQIP). Residues 39-59 (TPSPSGGTPSSSPPLLLSPGL) are compositionally biased toward low complexity. Positions 70–164 (REELRLRELE…AQRVRAEQSS (95 aa)) form a coiled coil. Polar residues predominate over residues 161 to 184 (EQSSPENASTAPESISSTASTHSN). Residues 185–202 (QPREAEIKQDNQDEEGVR) show a composition bias toward basic and acidic residues. Residues 270 to 541 (AALEEDTSKL…LQSRLRRQQN (272 aa)) adopt a coiled-coil conformation. The span at 559-581 (EDADGPPSDPDEDEEEELQLQIP) shows a compositional bias: acidic residues.

In Danio rerio (Zebrafish), this protein is Coiled-coil domain-containing protein 102A (ccdc102a).